The following is a 428-amino-acid chain: MPAWIFVNRSLALGKIRCFGFDMDYTLAAYKSPAYEALTFELLLERLVCIGYPHEILRYTYDPTFPTRRLVFDELYGNLLKVDAHGNVLLGAYGFTFLSEAEIWSFYPSKFIQRDDLQCFYILNMLFNLPETYLYACLVDFFSGCSRYTNCDTGYQHGNLFMSFRSLFQDVTDAMNNIHQSGCLKKTLEDLEKYVKKDPRLPILLGKMKEVGKVFLATNSSYNYTNAIMTYLFSISEAEASGRPWRSYFDLIVVDTQKPHFFAEGLVLRQVNTDSGKLHVGTYTGPHQHCAVYSGGSSDMVCELLGVRGMDILYIGDHIFGDILKSKKRQGWRTCLVVPELSWELDIWAQEKERLEELKRLDTHLADIYQHMDGSSCELQVINFTKREIQMPHESVVEQEQANLDPASCLLSCNQRSLPAKSCLSSAI.

The active-site Nucleophile is the aspartate 22. Mg(2+) is bound by residues aspartate 22, aspartate 24, and aspartate 317. The Proton donor role is filled by aspartate 24.

The protein belongs to the 5'(3')-deoxyribonucleotidase family.

The protein is 5'-nucleotidase domain-containing protein 4 (NT5DC4) of Homo sapiens (Human).